A 196-amino-acid polypeptide reads, in one-letter code: Small ribosomal subunit protein uS4c (196 aa).

A disordered region spans residues 16–36 (GALPGLTRKTPKSGSNLKKKF). One can recognise an S4 RNA-binding domain in the interval 89–169 (MRLDNILFRL…LPKHLTIDTL (81 aa)).

Belongs to the universal ribosomal protein uS4 family. As to quaternary structure, part of the 30S ribosomal subunit. Contacts protein S5. The interaction surface between S4 and S5 is involved in control of translational fidelity.

It localises to the plastid. The protein resides in the chloroplast. In terms of biological role, one of the primary rRNA binding proteins, it binds directly to 16S rRNA where it nucleates assembly of the body of the 30S subunit. Functionally, with S5 and S12 plays an important role in translational accuracy. The protein is Small ribosomal subunit protein uS4c (rps4) of Brachypodium pinnatum (Tor grass).